Reading from the N-terminus, the 2038-residue chain is HEAT repeat-containing protein 5A (2038 aa).

HEAT repeat units follow at residues 850–887 and 1082–1119; these read EVRRLVLTLVLGALESPTPLLRCAASEAWARLAQVADD and LLRRAVLACLRQLVQREAAEVSEHAIMLARDGRDAAAD. The disordered stretch occupies residues 1646 to 1668; the sequence is RSAEVDDGASEKETLPEFGEGKD. The residue at position 1647 (Ser-1647) is a Phosphoserine.

It belongs to the HEATR5 family.

This Mus musculus (Mouse) protein is HEAT repeat-containing protein 5A (Heatr5a).